Here is a 208-residue protein sequence, read N- to C-terminus: ATP-dependent Clp protease proteolytic subunit (208 aa).

Ser98 acts as the Nucleophile in catalysis. The active site involves His123.

This sequence belongs to the peptidase S14 family. Fourteen ClpP subunits assemble into 2 heptameric rings which stack back to back to give a disk-like structure with a central cavity, resembling the structure of eukaryotic proteasomes.

It is found in the cytoplasm. It catalyses the reaction Hydrolysis of proteins to small peptides in the presence of ATP and magnesium. alpha-casein is the usual test substrate. In the absence of ATP, only oligopeptides shorter than five residues are hydrolyzed (such as succinyl-Leu-Tyr-|-NHMec, and Leu-Tyr-Leu-|-Tyr-Trp, in which cleavage of the -Tyr-|-Leu- and -Tyr-|-Trp bonds also occurs).. Its function is as follows. Cleaves peptides in various proteins in a process that requires ATP hydrolysis. Has a chymotrypsin-like activity. Plays a major role in the degradation of misfolded proteins. This Wolbachia sp. subsp. Drosophila simulans (strain wRi) protein is ATP-dependent Clp protease proteolytic subunit.